Here is a 506-residue protein sequence, read N- to C-terminus: Cobyric acid synthase (506 aa).

A GATase cobBQ-type domain is found at 251–448; the sequence is DIDIAVVQVP…LHGLFDSDAF (198 aa). The Nucleophile role is filled by Cys-332. The active site involves His-440.

This sequence belongs to the CobB/CobQ family. CobQ subfamily.

It participates in cofactor biosynthesis; adenosylcobalamin biosynthesis. Catalyzes amidations at positions B, D, E, and G on adenosylcobyrinic A,C-diamide. NH(2) groups are provided by glutamine, and one molecule of ATP is hydrogenolyzed for each amidation. In Citrobacter koseri (strain ATCC BAA-895 / CDC 4225-83 / SGSC4696), this protein is Cobyric acid synthase.